The following is a 171-amino-acid chain: 3-hydroxydecanoyl-[acyl-carrier-protein] dehydratase (171 aa).

His70 is an active-site residue.

The protein belongs to the thioester dehydratase family. FabA subfamily. As to quaternary structure, homodimer.

The protein resides in the cytoplasm. The catalysed reaction is a (3R)-hydroxyacyl-[ACP] = a (2E)-enoyl-[ACP] + H2O. It carries out the reaction (3R)-hydroxydecanoyl-[ACP] = (2E)-decenoyl-[ACP] + H2O. The enzyme catalyses (2E)-decenoyl-[ACP] = (3Z)-decenoyl-[ACP]. Its pathway is lipid metabolism; fatty acid biosynthesis. Functionally, necessary for the introduction of cis unsaturation into fatty acids. Catalyzes the dehydration of (3R)-3-hydroxydecanoyl-ACP to E-(2)-decenoyl-ACP and then its isomerization to Z-(3)-decenoyl-ACP. Can catalyze the dehydratase reaction for beta-hydroxyacyl-ACPs with saturated chain lengths up to 16:0, being most active on intermediate chain length. This chain is 3-hydroxydecanoyl-[acyl-carrier-protein] dehydratase, found in Pseudomonas fluorescens (strain ATCC BAA-477 / NRRL B-23932 / Pf-5).